A 427-amino-acid chain; its full sequence is 3-phosphoshikimate 1-carboxyvinyltransferase (427 aa).

Residues K20, S21, and R25 each coordinate 3-phosphoshikimate. Phosphoenolpyruvate is bound at residue K20. Phosphoenolpyruvate contacts are provided by G92 and R120. 3-phosphoshikimate-binding residues include S165, Q167, D313, and K340. Phosphoenolpyruvate is bound at residue Q167. D313 functions as the Proton acceptor in the catalytic mechanism. Phosphoenolpyruvate contacts are provided by R344 and R388.

It belongs to the EPSP synthase family. As to quaternary structure, monomer.

It is found in the cytoplasm. It carries out the reaction 3-phosphoshikimate + phosphoenolpyruvate = 5-O-(1-carboxyvinyl)-3-phosphoshikimate + phosphate. It participates in metabolic intermediate biosynthesis; chorismate biosynthesis; chorismate from D-erythrose 4-phosphate and phosphoenolpyruvate: step 6/7. In terms of biological role, catalyzes the transfer of the enolpyruvyl moiety of phosphoenolpyruvate (PEP) to the 5-hydroxyl of shikimate-3-phosphate (S3P) to produce enolpyruvyl shikimate-3-phosphate and inorganic phosphate. The polypeptide is 3-phosphoshikimate 1-carboxyvinyltransferase (Geobacillus kaustophilus (strain HTA426)).